Consider the following 695-residue polypeptide: MAP kinase phosphatase with leucine-rich repeats protein 2 (695 aa).

LRR repeat units lie at residues 101–122, 124–145, 147–167, 170–191, 193–214, 215–235, 239–260, 262–283, 286–307, and 309–330; these read SLKSLILDFNKITEIPDCITLL, NLNHLSLAANQLTHVPEFLSQL, SLETFEIGINQFTCFPLNVCK, SLTSLHLETNNIKSLPEEFLNL, NLKDLSLFDNQLKEIPDSLPNN, IEKLNLGCNDISSSKSDSLIR, SLTTLNLSENKIEELDESLSCL, NVKTLMLDCNMIKVIPGSVLGS, SLVTLNLPHNLISDLPPEVILL, and NLRIIDLRGNNFENCKKLIPTE. Residues 413-426 show a composition bias toward low complexity; it reads SENNEINENNQLLT. Disordered regions lie at residues 413-438 and 492-519; these read SENNEINENNQLLTTDDDYNTDKNDS and QEQLPQSKPENEKLTNIPEQQQKQQQQQ. Positions 556–695 constitute a Tyrosine-protein phosphatase domain; it reads VPDLIIDKLY…LKKFEKDLFK (140 aa). Cys-639 serves as the catalytic Phosphocysteine intermediate.

The protein belongs to the protein-tyrosine phosphatase family. Non-receptor class dual specificity subfamily.

The catalysed reaction is O-phospho-L-tyrosyl-[protein] + H2O = L-tyrosyl-[protein] + phosphate. It carries out the reaction O-phospho-L-seryl-[protein] + H2O = L-seryl-[protein] + phosphate. It catalyses the reaction O-phospho-L-threonyl-[protein] + H2O = L-threonyl-[protein] + phosphate. Probable phosphatase with dual specificity toward Ser/Thr and Tyr-containing proteins. This Dictyostelium discoideum (Social amoeba) protein is MAP kinase phosphatase with leucine-rich repeats protein 2 (mpl2).